We begin with the raw amino-acid sequence, 304 residues long: Ferrochelatase (304 aa).

H169 and E241 together coordinate Fe cation.

This sequence belongs to the ferrochelatase family.

The protein resides in the cytoplasm. The catalysed reaction is heme b + 2 H(+) = protoporphyrin IX + Fe(2+). Its pathway is porphyrin-containing compound metabolism; protoheme biosynthesis; protoheme from protoporphyrin-IX: step 1/1. In terms of biological role, catalyzes the ferrous insertion into protoporphyrin IX. The chain is Ferrochelatase from Thermoplasma volcanium (strain ATCC 51530 / DSM 4299 / JCM 9571 / NBRC 15438 / GSS1).